A 99-amino-acid polypeptide reads, in one-letter code: Regulatory protein FanB (99 aa).

Its function is as follows. Trans-acting protein involved in the regulation of the biogenesis of K99 fimbriae (FanC). This chain is Regulatory protein FanB (fanB), found in Escherichia coli.